Consider the following 413-residue polypeptide: FAD-dependent monooxygenase vrtH (413 aa).

A signal peptide spans methionine 1–glycine 23. Asparagine 5 carries an N-linked (GlcNAc...) asparagine glycan. Residues glutamate 37 and alanine 48 each coordinate FAD. Asparagine 94 is a glycosylation site (N-linked (GlcNAc...) asparagine). An FAD-binding site is contributed by arginine 120. A glycan (N-linked (GlcNAc...) asparagine) is linked at asparagine 232. FAD-binding residues include aspartate 327 and glycine 340.

The protein belongs to the paxM FAD-dependent monooxygenase family. It depends on FAD as a cofactor.

The protein operates within secondary metabolite biosynthesis; terpenoid biosynthesis. FAD-dependent monooxygenase; part of the gene cluster that mediates the biosynthesis of viridicatumtoxin, a tetracycline-like fungal meroterpenoid with a unique, fused spirobicyclic ring system. The first step of the pathway is the production of the malonamoyl-CoA starter unit for the polyketide synthase vrtA. The aldolase vrtJ may be involved in the synthesis of the malonamate substrate for malonamoyl-CoA synthetase vrtB. The polyketide synthase vrtA then may utilize the malonamoyl-CoA starter unit, followed by sequential condensation of eight malonyl-CoA units to form the polyketide backbone. The cyclization of the last ring could be mediated by the lactamase-like protein vrtG. The proposed post-PKS tailoring steps are a hydroxylation at C5 catalyzed the cytochrome P450 monooxygenase vrtE, a hydroxylation at C12a catalyzed by VrtH and/or VrtI, and an O-methylation by the O-methyltransferase vrtF. VrtC is then proposed to catalyze the transfer of a geranyl group synthesized by vrtD to the aromatic C ring of the tetracyclic polyketide intermediate of viridicatumtoxin to yield previridicatumtoxin. Finally, the cytochrome P450 monooxygenase vrtK catalyzes the spirocyclization of the geranyl moiety of previridicatumtoxin to afford viridicatumtoxin. This is FAD-dependent monooxygenase vrtH from Penicillium aethiopicum.